The primary structure comprises 224 residues: Probable octanoyltransferase (224 aa).

Residues 28-199 (GLTGDIALVT…KLALELGLTP (172 aa)) enclose the BPL/LPL catalytic domain. Residues 66–73 (RGGDATYH), 130–132 (SIG), and 143–145 (GVA) contribute to the substrate site. The Acyl-thioester intermediate role is filled by C161.

This sequence belongs to the LipB family.

The protein resides in the cytoplasm. The catalysed reaction is octanoyl-[ACP] + L-lysyl-[protein] = N(6)-octanoyl-L-lysyl-[protein] + holo-[ACP] + H(+). The protein operates within protein modification; protein lipoylation via endogenous pathway; protein N(6)-(lipoyl)lysine from octanoyl-[acyl-carrier-protein]: step 1/2. Functionally, catalyzes the transfer of endogenously produced octanoic acid from octanoyl-acyl-carrier-protein onto the lipoyl domains of lipoate-dependent enzymes. Lipoyl-ACP can also act as a substrate although octanoyl-ACP is likely to be the physiological substrate. This Pyrobaculum aerophilum (strain ATCC 51768 / DSM 7523 / JCM 9630 / CIP 104966 / NBRC 100827 / IM2) protein is Probable octanoyltransferase.